A 353-amino-acid polypeptide reads, in one-letter code: MKIAYVVSSKKKCGPNIVILNIVKELANKHEMEIFFLDESDDDVFECVNVKSTQIKKASDLKEHLKRFDIIHSSGIRPDALVVLCKVIYRVKCKIITTIHNYVFQDLYYSYGLVKSLIGGLLWCSIWLFFDKLVILSKNADNYYWFLPSAKKNIIYNGIDDNDCLQNKKCNYRKEFNIPDDGILAGSCANLTKRKGIDLVIQTLTKEHKIYYIVAGNGIEKHNLINLVKARKLHERVYFIDFLDEPESFMSQLDVFLMPSRSEGFGLTVLESTKLGIPVITSNIPIFMELFDQMCLTFDIKNPSTLIDVITYAKKNRLHLSQKFHAIFQDRFTSSKMATKYENVYNNLFREVL.

Residues Ser116 to Leu136 form a helical membrane-spanning segment. UDP-binding residues include Asn190 and Glu271. The short motif at Glu263–Glu271 is the E(x7)E element.

It belongs to the glycosyltransferase group 1 family. Glycosyltransferase 4 subfamily.

Its subcellular location is the membrane. It functions in the pathway bacterial outer membrane biogenesis; LPS O-antigen biosynthesis. Activated by 5mM MnCl(2) and MgCl(2). No significant effect on activity by 5 mM ethylenediaminetetraacetic acid (EDTA), 0.125-0.5% Triton X-100 or dithiothreitol (DTT). Inhibited by 5 mM Zn-acetate. Functionally, involved in the assembly of the O-repeating unit during O-antigen biosynthesis. Glucosyltransferase accountable for the alpha-D-Glc-1,4-beta-D-Gal linkage within the O-antigen. Transfers alpha-1,4-Glc to the Gal moiety of a specific Gal-beta1-3GalNAc-alpha-OPO3-PO3-phenoxyundecyl (Gal-beta1-3GalNAc-PP-PhU) synthetic natural acceptor substrate analog. Requires both Gal-beta1-3GalNAc-alpha and the diphosphate moiety in the acceptor. Not active with GalNAc-PP-PhU, GlcNAc-PP-PhU, Gal-beta1-3GalNAc-alpha-O-benzyl, D-Rha-alpha1-3GlcNAc-alpha-PP-PhU or D-Man-alpha1-3Man-alpha-5-benzamidopentyl (BAP), nor with glycopeptides TTTVTP (Gal-beta1-3GalNAc-alpha-)TPTG or TT (Gal-beta1-3GalNAc-alpha-)TVTPTPTG as acceptor substrates. Has a broad nucleotide sugar donor substrate specificity with ADP-Glc, TDP-Glc and UDP-Glc as superior donors. Gal, GlcNAc, and GalNAc residues are transferred from UDP-sugars, but with low activity. UDP-Xyl, UDP-GlcA, GDP-Fuc or GDP-K-Rha do not act as donors. The chain is O-antigen biosynthesis glycosyltransferase WclY from Escherichia coli.